Consider the following 281-residue polypeptide: Ribosomal protein L11 methyltransferase (281 aa).

S-adenosyl-L-methionine contacts are provided by Thr133, Gly154, Asp175, and Asn216.

It belongs to the methyltransferase superfamily. PrmA family.

It is found in the cytoplasm. It catalyses the reaction L-lysyl-[protein] + 3 S-adenosyl-L-methionine = N(6),N(6),N(6)-trimethyl-L-lysyl-[protein] + 3 S-adenosyl-L-homocysteine + 3 H(+). Its function is as follows. Methylates ribosomal protein L11. The protein is Ribosomal protein L11 methyltransferase of Campylobacter jejuni subsp. jejuni serotype O:2 (strain ATCC 700819 / NCTC 11168).